The sequence spans 76 residues: cAMP-dependent protein kinase inhibitor alpha (76 aa).

Threonine 2 is modified (blocked amino end (Thr)). The segment at 49–76 (KAEGEGDAQRNPSEQTGEAQGEAAKQES) is disordered.

This sequence belongs to the PKI family.

Functionally, extremely potent competitive inhibitor of cAMP-dependent protein kinase activity, this protein interacts with the catalytic subunit of the enzyme after the cAMP-induced dissociation of its regulatory chains. This Gallus gallus (Chicken) protein is cAMP-dependent protein kinase inhibitor alpha (PKIA).